The sequence spans 298 residues: Transcription factor bHLH114 (298 aa).

The stretch at 117–149 forms a coiled coil; it reads LDHEIRNHKSSKEQITQDYKNLTSKRSEELEEN. The disordered stretch occupies residues 126 to 154; that stretch reads SSKEQITQDYKNLTSKRSEELEENSDEYS. The segment covering 129-140 has biased composition (polar residues); sequence EQITQDYKNLTS. The bHLH domain maps to 163-212; it reads LETLSPLPSFKVRKEKLGDRITALQQLVSPFGKTDTASVLNEAVEYIKFL.

As to quaternary structure, homodimer. As to expression, differentiating root endodermis.

The protein resides in the nucleus. In Arabidopsis thaliana (Mouse-ear cress), this protein is Transcription factor bHLH114 (BHLH114).